Reading from the N-terminus, the 122-residue chain is Large ribosomal subunit protein uL14 (122 aa).

Belongs to the universal ribosomal protein uL14 family. In terms of assembly, part of the 50S ribosomal subunit. Forms a cluster with proteins L3 and L19. In the 70S ribosome, L14 and L19 interact and together make contacts with the 16S rRNA in bridges B5 and B8.

Its function is as follows. Binds to 23S rRNA. Forms part of two intersubunit bridges in the 70S ribosome. The polypeptide is Large ribosomal subunit protein uL14 (Xylella fastidiosa (strain 9a5c)).